Here is an 839-residue protein sequence, read N- to C-terminus: Dynein axonemal assembly factor 5 (839 aa).

HEAT repeat units follow at residues 10–48 (TSDV…DEKL), 54–92 (QHVF…HVPR), 94–137 (EEAL…VCGK), 140–178 (APYL…CIPE), 181–219 (HMQA…YSSG), 221–257 (SVDD…KLQD), 259–297 (YSFF…QWEK), 578–617 (GETL…KASE), 675–713 (LQVE…TCER), 717–755 (PDKL…CITD), and 723–761 (IYPE…ERTT).

It belongs to the DNAAF5 family. Interacts with DNAI2; probably involved in outer arm dynein assembly.

It localises to the cytoplasm. The protein resides in the dynein axonemal particle. Cytoplasmic protein involved in the delivery of the dynein machinery to the motile cilium. It is required for the assembly of the axonemal dynein inner and outer arms, two structures attached to the peripheral outer doublet A microtubule of the axoneme, that play a crucial role in cilium motility. The sequence is that of Dynein axonemal assembly factor 5 from Xenopus laevis (African clawed frog).